The primary structure comprises 351 residues: Dihydroorotate dehydrogenase (quinone) (351 aa).

FMN is bound by residues 67 to 71 (AGFDK) and T91. Residue K71 participates in substrate binding. 116–120 (NAMGF) lines the substrate pocket. Residues N145 and N178 each contribute to the FMN site. Residue N178 participates in substrate binding. S181 serves as the catalytic Nucleophile. N183 serves as a coordination point for substrate. Residues K214 and T242 each coordinate FMN. 243–244 (NT) serves as a coordination point for substrate. Residues G262, G291, and 312 to 313 (YT) contribute to the FMN site.

It belongs to the dihydroorotate dehydrogenase family. Type 2 subfamily. Monomer. FMN is required as a cofactor.

It localises to the cell membrane. The catalysed reaction is (S)-dihydroorotate + a quinone = orotate + a quinol. The protein operates within pyrimidine metabolism; UMP biosynthesis via de novo pathway; orotate from (S)-dihydroorotate (quinone route): step 1/1. Catalyzes the conversion of dihydroorotate to orotate with quinone as electron acceptor. This Nitratiruptor sp. (strain SB155-2) protein is Dihydroorotate dehydrogenase (quinone).